The following is a 257-amino-acid chain: 3-deoxy-manno-octulosonate cytidylyltransferase (257 aa).

Belongs to the KdsB family.

It localises to the cytoplasm. The enzyme catalyses 3-deoxy-alpha-D-manno-oct-2-ulosonate + CTP = CMP-3-deoxy-beta-D-manno-octulosonate + diphosphate. It functions in the pathway nucleotide-sugar biosynthesis; CMP-3-deoxy-D-manno-octulosonate biosynthesis; CMP-3-deoxy-D-manno-octulosonate from 3-deoxy-D-manno-octulosonate and CTP: step 1/1. The protein operates within bacterial outer membrane biogenesis; lipopolysaccharide biosynthesis. Activates KDO (a required 8-carbon sugar) for incorporation into bacterial lipopolysaccharide in Gram-negative bacteria. This chain is 3-deoxy-manno-octulosonate cytidylyltransferase, found in Xylella fastidiosa (strain M12).